A 356-amino-acid chain; its full sequence is sn-glycerol-3-phosphate import ATP-binding protein UgpC (356 aa).

The region spanning 4 to 235 is the ABC transporter domain; sequence LKLQAVTKSW…PASRFVASFI (232 aa). 37 to 44 lines the ATP pocket; the sequence is GPSGCGKS.

Belongs to the ABC transporter superfamily. sn-glycerol-3-phosphate importer (TC 3.A.1.1.3) family. In terms of assembly, the complex is composed of two ATP-binding proteins (UgpC), two transmembrane proteins (UgpA and UgpE) and a solute-binding protein (UgpB).

It is found in the cell inner membrane. It catalyses the reaction sn-glycerol 3-phosphate(out) + ATP + H2O = sn-glycerol 3-phosphate(in) + ADP + phosphate + H(+). Part of the ABC transporter complex UgpBAEC involved in sn-glycerol-3-phosphate (G3P) import. Responsible for energy coupling to the transport system. This is sn-glycerol-3-phosphate import ATP-binding protein UgpC from Salmonella typhimurium (strain LT2 / SGSC1412 / ATCC 700720).